The chain runs to 372 residues: Phospho-N-acetylmuramoyl-pentapeptide-transferase (372 aa).

A run of 10 helical transmembrane segments spans residues 21 to 41, 71 to 91, 98 to 118, 134 to 154, 176 to 196, 211 to 231, 251 to 271, 275 to 295, 300 to 320, and 349 to 369; these read SLTLRALLAVITALAFSMIFG, TPTMGGVLILSAIGVSTLLWA, VWILLIVMIIFGAVGWADDWL, YFWLSMGALFVGISLYYIATL, MIPFSAVPFGIGFIIFTYFVI, GLAILPVVLVAAGLGAMAYVS, VIIVCGAMIGAGLGFLWFNAH, VFMGDVGALSLGAMLGTIAVM, IAFAIMGGLFVAEALSVMLQV, and QVVARFWIIAIILVILGLMTL.

It belongs to the glycosyltransferase 4 family. MraY subfamily. The cofactor is Mg(2+).

Its subcellular location is the cell inner membrane. It catalyses the reaction UDP-N-acetyl-alpha-D-muramoyl-L-alanyl-gamma-D-glutamyl-meso-2,6-diaminopimeloyl-D-alanyl-D-alanine + di-trans,octa-cis-undecaprenyl phosphate = di-trans,octa-cis-undecaprenyl diphospho-N-acetyl-alpha-D-muramoyl-L-alanyl-D-glutamyl-meso-2,6-diaminopimeloyl-D-alanyl-D-alanine + UMP. It participates in cell wall biogenesis; peptidoglycan biosynthesis. In terms of biological role, catalyzes the initial step of the lipid cycle reactions in the biosynthesis of the cell wall peptidoglycan: transfers peptidoglycan precursor phospho-MurNAc-pentapeptide from UDP-MurNAc-pentapeptide onto the lipid carrier undecaprenyl phosphate, yielding undecaprenyl-pyrophosphoryl-MurNAc-pentapeptide, known as lipid I. The sequence is that of Phospho-N-acetylmuramoyl-pentapeptide-transferase from Psychrobacter arcticus (strain DSM 17307 / VKM B-2377 / 273-4).